Consider the following 389-residue polypeptide: Succinate--CoA ligase [ADP-forming] subunit beta (389 aa).

Residues 9–236 (RDMFEAHGVP…KDAADPLEAK (228 aa)) enclose the ATP-grasp domain. Residues lysine 45, 52–54 (GRG), alanine 94, and glutamate 99 each bind ATP. Residues asparagine 191 and aspartate 205 each contribute to the Mg(2+) site. Substrate is bound by residues asparagine 256 and 318–320 (GIT).

The protein belongs to the succinate/malate CoA ligase beta subunit family. Heterotetramer of two alpha and two beta subunits. The cofactor is Mg(2+).

It catalyses the reaction succinate + ATP + CoA = succinyl-CoA + ADP + phosphate. It carries out the reaction GTP + succinate + CoA = succinyl-CoA + GDP + phosphate. It participates in carbohydrate metabolism; tricarboxylic acid cycle; succinate from succinyl-CoA (ligase route): step 1/1. Succinyl-CoA synthetase functions in the citric acid cycle (TCA), coupling the hydrolysis of succinyl-CoA to the synthesis of either ATP or GTP and thus represents the only step of substrate-level phosphorylation in the TCA. The beta subunit provides nucleotide specificity of the enzyme and binds the substrate succinate, while the binding sites for coenzyme A and phosphate are found in the alpha subunit. This is Succinate--CoA ligase [ADP-forming] subunit beta from Paenarthrobacter aurescens (strain TC1).